Consider the following 72-residue polypeptide: Large ribosomal subunit protein uL29 (72 aa).

Belongs to the universal ribosomal protein uL29 family.

In Caldicellulosiruptor saccharolyticus (strain ATCC 43494 / DSM 8903 / Tp8T 6331), this protein is Large ribosomal subunit protein uL29.